The primary structure comprises 141 residues: Nucleoside diphosphate kinase (141 aa).

K11, F59, R87, T93, R104, and N114 together coordinate ATP. H117 acts as the Pros-phosphohistidine intermediate in catalysis.

This sequence belongs to the NDK family. Homotetramer. Mg(2+) is required as a cofactor.

It localises to the cytoplasm. The catalysed reaction is a 2'-deoxyribonucleoside 5'-diphosphate + ATP = a 2'-deoxyribonucleoside 5'-triphosphate + ADP. It carries out the reaction a ribonucleoside 5'-diphosphate + ATP = a ribonucleoside 5'-triphosphate + ADP. Its function is as follows. Major role in the synthesis of nucleoside triphosphates other than ATP. The ATP gamma phosphate is transferred to the NDP beta phosphate via a ping-pong mechanism, using a phosphorylated active-site intermediate. The chain is Nucleoside diphosphate kinase from Burkholderia thailandensis (strain ATCC 700388 / DSM 13276 / CCUG 48851 / CIP 106301 / E264).